The sequence spans 300 residues: MKIGVIMGGISTEREVSLNSGREVIKYLELLEHEIIPIIIDKKEDVMEKAKGIDFAFLALHGKFGEDGTVQSVLQTLDIPYSGCGPLTSAICMDKDMTKKILKYANINTADWVNVSSVENIDYEAIEKIGYPVFVKPNSGGSSVATNLVKDKEGIKEAVELALKYDKEVMIENYTKGEEITCCMLNGKMLPVLAIRPHAEFFDYTAKYADGGSDEVVIELEENLHKKVEEMALACWKELKCEVYVRVDMIVKDGIPYVLELNTLPGMTKNSLFPKSANAVGISFAELLNSIVKYSLEVER.

One can recognise an ATP-grasp domain in the interval 99 to 293 (KKILKYANIN…FAELLNSIVK (195 aa)). 126–181 (IEKIGYPVFVKPNSGGSSVATNLVKDKEGIKEAVELALKYDKEVMIENYTKGEEIT) contributes to the ATP binding site. Mg(2+) is bound by residues Asp248, Glu260, and Asn262.

This sequence belongs to the D-alanine--D-alanine ligase family. Mg(2+) is required as a cofactor. Requires Mn(2+) as cofactor.

It is found in the cytoplasm. The catalysed reaction is 2 D-alanine + ATP = D-alanyl-D-alanine + ADP + phosphate + H(+). The protein operates within cell wall biogenesis; peptidoglycan biosynthesis. In terms of biological role, cell wall formation. The polypeptide is D-alanine--D-alanine ligase (Clostridium botulinum (strain ATCC 19397 / Type A)).